A 392-amino-acid polypeptide reads, in one-letter code: Formate-dependent phosphoribosylglycinamide formyltransferase (392 aa).

N(1)-(5-phospho-beta-D-ribosyl)glycinamide contacts are provided by residues 22-23 (EL) and E82. ATP is bound by residues R114, K155, 160–165 (SSGKGQ), 195–198 (EGVV), and E203. Positions 119-308 (RLAAEELQLP…EFALHVRAFL (190 aa)) constitute an ATP-grasp domain. Mg(2+)-binding residues include E267 and E279. Residues D286, K355, and 362–363 (RR) contribute to the N(1)-(5-phospho-beta-D-ribosyl)glycinamide site.

The protein belongs to the PurK/PurT family. Homodimer.

The catalysed reaction is N(1)-(5-phospho-beta-D-ribosyl)glycinamide + formate + ATP = N(2)-formyl-N(1)-(5-phospho-beta-D-ribosyl)glycinamide + ADP + phosphate + H(+). It functions in the pathway purine metabolism; IMP biosynthesis via de novo pathway; N(2)-formyl-N(1)-(5-phospho-D-ribosyl)glycinamide from N(1)-(5-phospho-D-ribosyl)glycinamide (formate route): step 1/1. Its function is as follows. Involved in the de novo purine biosynthesis. Catalyzes the transfer of formate to 5-phospho-ribosyl-glycinamide (GAR), producing 5-phospho-ribosyl-N-formylglycinamide (FGAR). Formate is provided by PurU via hydrolysis of 10-formyl-tetrahydrofolate. The polypeptide is Formate-dependent phosphoribosylglycinamide formyltransferase (Klebsiella pneumoniae (strain 342)).